A 550-amino-acid chain; its full sequence is Glucose import ATP-binding protein TsgD13 (550 aa).

ABC transporter domains lie at Leu7–Glu270 and Leu287–Gly533. Gly39 to Ser46 contributes to the ATP binding site. Positions Met529–Ser550 are disordered.

Belongs to the ABC transporter superfamily. In terms of assembly, the complex is composed of two ATP-binding proteins (TsgD13), two transmembrane proteins (TsgB13 and TsgC13) and a solute-binding protein (TsgA13).

It localises to the cell membrane. The catalysed reaction is D-glucose(out) + ATP + H2O = D-glucose(in) + ADP + phosphate + H(+). Its function is as follows. Part of an ABC transporter complex involved in glucose import. Responsible for energy coupling to the transport system. The polypeptide is Glucose import ATP-binding protein TsgD13 (tsgD13) (Haloferax volcanii (strain ATCC 29605 / DSM 3757 / JCM 8879 / NBRC 14742 / NCIMB 2012 / VKM B-1768 / DS2) (Halobacterium volcanii)).